A 260-amino-acid chain; its full sequence is Acetylglutamate kinase (260 aa).

Substrate is bound by residues 46–47 (GG), R68, and N160.

The protein belongs to the acetylglutamate kinase family. ArgB subfamily.

Its subcellular location is the cytoplasm. It catalyses the reaction N-acetyl-L-glutamate + ATP = N-acetyl-L-glutamyl 5-phosphate + ADP. The protein operates within amino-acid biosynthesis; L-arginine biosynthesis; N(2)-acetyl-L-ornithine from L-glutamate: step 2/4. Functionally, catalyzes the ATP-dependent phosphorylation of N-acetyl-L-glutamate. The sequence is that of Acetylglutamate kinase from Shewanella oneidensis (strain ATCC 700550 / JCM 31522 / CIP 106686 / LMG 19005 / NCIMB 14063 / MR-1).